Here is a 456-residue protein sequence, read N- to C-terminus: Bifunctional protein GlmU (456 aa).

The tract at residues 1 to 229 (MLNNAMSVVI…LSEVEGVNNR (229 aa)) is pyrophosphorylase. UDP-N-acetyl-alpha-D-glucosamine is bound by residues 11 to 14 (LAAG), Lys-25, Gln-76, 81 to 82 (GT), 103 to 105 (YGD), Gly-140, Glu-154, Asn-169, and Asn-227. Asp-105 serves as a coordination point for Mg(2+). Asn-227 lines the Mg(2+) pocket. Residues 230–250 (LQLSRLERVYQSEQAEKLLLA) are linker. The segment at 251–456 (GVMLRDPARF…EGWRRPVKKK (206 aa)) is N-acetyltransferase. Positions 333 and 351 each coordinate UDP-N-acetyl-alpha-D-glucosamine. The active-site Proton acceptor is His-363. 2 residues coordinate UDP-N-acetyl-alpha-D-glucosamine: Tyr-366 and Asn-377. Acetyl-CoA contacts are provided by residues Ala-380, 386–387 (NY), Ser-405, Ala-423, and Arg-440.

The protein in the N-terminal section; belongs to the N-acetylglucosamine-1-phosphate uridyltransferase family. In the C-terminal section; belongs to the transferase hexapeptide repeat family. Homotrimer. Mg(2+) is required as a cofactor.

It is found in the cytoplasm. It catalyses the reaction alpha-D-glucosamine 1-phosphate + acetyl-CoA = N-acetyl-alpha-D-glucosamine 1-phosphate + CoA + H(+). The enzyme catalyses N-acetyl-alpha-D-glucosamine 1-phosphate + UTP + H(+) = UDP-N-acetyl-alpha-D-glucosamine + diphosphate. The protein operates within nucleotide-sugar biosynthesis; UDP-N-acetyl-alpha-D-glucosamine biosynthesis; N-acetyl-alpha-D-glucosamine 1-phosphate from alpha-D-glucosamine 6-phosphate (route II): step 2/2. It functions in the pathway nucleotide-sugar biosynthesis; UDP-N-acetyl-alpha-D-glucosamine biosynthesis; UDP-N-acetyl-alpha-D-glucosamine from N-acetyl-alpha-D-glucosamine 1-phosphate: step 1/1. It participates in bacterial outer membrane biogenesis; LPS lipid A biosynthesis. Functionally, catalyzes the last two sequential reactions in the de novo biosynthetic pathway for UDP-N-acetylglucosamine (UDP-GlcNAc). The C-terminal domain catalyzes the transfer of acetyl group from acetyl coenzyme A to glucosamine-1-phosphate (GlcN-1-P) to produce N-acetylglucosamine-1-phosphate (GlcNAc-1-P), which is converted into UDP-GlcNAc by the transfer of uridine 5-monophosphate (from uridine 5-triphosphate), a reaction catalyzed by the N-terminal domain. The protein is Bifunctional protein GlmU of Escherichia coli O127:H6 (strain E2348/69 / EPEC).